Reading from the N-terminus, the 316-residue chain is Beta-agarase (316 aa).

The signal sequence occupies residues 1 to 18 (MKRKLFTICLASLQFACA). The 289-residue stretch at 27 to 315 (YEWDIYPVPA…WIRVYTLVPE (289 aa)) folds into the GH16 domain. Residues Trp-78, 87 to 97 (QRDHVSVSDGF), and 101 to 103 (RAS) contribute to the substrate site. Glu-167 functions as the Nucleophile in the catalytic mechanism. The active-site Proton donor is Glu-172. Arg-197 is a binding site for substrate.

This sequence belongs to the glycosyl hydrolase 16 family.

It carries out the reaction Hydrolysis of (1-&gt;4)-beta-D-galactosidic linkages in agarose, giving the tetramer as the predominant product.. In terms of biological role, cleaves the beta-1,4-linkages between beta-D-galactose and alpha-L-3,6-anhydro-galactose residues in agarose. Cleaves agarose in a random manner with retention of the anomeric-bond configuration, producing beta-anomers that give rise progressively to alpha-anomers when mutarotation takes place. The polypeptide is Beta-agarase (Phocaeicola plebeius (strain DSM 17135 / JCM 12973 / CCUG 54634 / M2) (Bacteroides plebeius)).